A 143-amino-acid chain; its full sequence is Large ribosomal subunit protein uL11 (143 aa).

Belongs to the universal ribosomal protein uL11 family. Part of the ribosomal stalk of the 50S ribosomal subunit. Interacts with L10 and the large rRNA to form the base of the stalk. L10 forms an elongated spine to which L12 dimers bind in a sequential fashion forming a multimeric L10(L12)X complex. One or more lysine residues are methylated.

Its function is as follows. Forms part of the ribosomal stalk which helps the ribosome interact with GTP-bound translation factors. In Aromatoleum aromaticum (strain DSM 19018 / LMG 30748 / EbN1) (Azoarcus sp. (strain EbN1)), this protein is Large ribosomal subunit protein uL11.